Here is a 138-residue protein sequence, read N- to C-terminus: SHSKHHATYVKGANDAVTKLEEARAKEDHSTILLNEKNLAFNLAGHVNHTIWWKNLSPNGGDKPTGELAAAIDEAFGSFDKFRAQFHAAATTVQGSGWAALGWDTLGNKLLIFQVYDHQTNFPLGIVPLLLLDMWEHA.

Positions 1, 49, 133, and 137 each coordinate Mn(2+).

It belongs to the iron/manganese superoxide dismutase family. Mn(2+) is required as a cofactor.

The enzyme catalyses 2 superoxide + 2 H(+) = H2O2 + O2. Its function is as follows. Destroys superoxide anion radicals which are normally produced within the cells and which are toxic to biological systems. The polypeptide is Superoxide dismutase [Mn] (sodA) (Mycobacterium marinum).